Here is a 100-residue protein sequence, read N- to C-terminus: Large ribosomal subunit protein uL23 (100 aa).

Belongs to the universal ribosomal protein uL23 family. In terms of assembly, part of the 50S ribosomal subunit. Contacts protein L29, and trigger factor when it is bound to the ribosome.

One of the early assembly proteins it binds 23S rRNA. One of the proteins that surrounds the polypeptide exit tunnel on the outside of the ribosome. Forms the main docking site for trigger factor binding to the ribosome. In Synechococcus sp. (strain RCC307), this protein is Large ribosomal subunit protein uL23.